A 781-amino-acid polypeptide reads, in one-letter code: Serine/threonine-protein kinase PLK4 (781 aa).

The Protein kinase domain occupies 14 to 268; that stretch reads YEVQHLLGKG…LEQVLRHPFM (255 aa). Residues 20–28 and lysine 43 contribute to the ATP site; that span reads LGKGGFACV. The active-site Proton acceptor is the aspartate 139. One can recognise a Cryptic POLO box 1 (CPB1) domain in the interval 397–514; sequence TEHISVPPLN…ARFVGLVKSK (118 aa). Residues 463-486 form a disordered region; it reads QPDPGRGLPIQEQTSETHSSGTDN. Residues 473–486 are compositionally biased toward polar residues; that stretch reads QEQTSETHSSGTDN. One can recognise a Cryptic POLO box 2 (CPB2) domain in the interval 515–618; that stretch reads TPKVTYFSAL…GRRPVVEVLP (104 aa). Residues 672–751 enclose the POLO box domain; the sequence is PIKRLNVPGV…LPQVQMKLRC (80 aa).

Belongs to the protein kinase superfamily. Ser/Thr protein kinase family. CDC5/Polo subfamily. Homodimer. In terms of processing, ubiquitinated by the SCF(Slimb) ubiquitin ligase complex; leading to its degradation by the proteasome during interphase and regulating centriole number and ensuring the block to centriole reduplication.

The protein resides in the cytoplasm. The protein localises to the cytoskeleton. It localises to the microtubule organizing center. Its subcellular location is the centrosome. It is found in the centriole. It catalyses the reaction L-seryl-[protein] + ATP = O-phospho-L-seryl-[protein] + ADP + H(+). The catalysed reaction is L-threonyl-[protein] + ATP = O-phospho-L-threonyl-[protein] + ADP + H(+). Functionally, serine/threonine-protein kinase that plays a central role in centriole duplication. Able to trigger procentriole formation on the surface of the mother centriole cylinder, using mother centriole as a platform, leading to the recruitment of centriole biogenesis proteins such as sas-6. When overexpressed, it is able to induce centrosome amplification through the simultaneous generation of multiple procentrioles adjoining each parental centriole during S phase. Centrosome amplification following overexpression can initiate tumorigenesis, highlighting the importance of centrosome regulation in cancers. In Drosophila virilis (Fruit fly), this protein is Serine/threonine-protein kinase PLK4 (SAK).